Consider the following 136-residue polypeptide: Globin-2 (136 aa).

The Globin domain maps to 1 to 134 (VSQADIAAVQ…ILSQMKIALS (134 aa)). H89 contacts heme b.

The protein belongs to the globin family. In terms of assembly, homodimer.

This chain is Globin-2, found in Phreagena soyoae (Deep-sea cold-seep clam).